Here is a 507-residue protein sequence, read N- to C-terminus: ATP synthase subunit alpha, chloroplastic (507 aa).

170-177 (GDRQTGKT) serves as a coordination point for ATP.

This sequence belongs to the ATPase alpha/beta chains family. F-type ATPases have 2 components, CF(1) - the catalytic core - and CF(0) - the membrane proton channel. CF(1) has five subunits: alpha(3), beta(3), gamma(1), delta(1), epsilon(1). CF(0) has four main subunits: a, b, b' and c.

The protein localises to the plastid. Its subcellular location is the chloroplast thylakoid membrane. It carries out the reaction ATP + H2O + 4 H(+)(in) = ADP + phosphate + 5 H(+)(out). Functionally, produces ATP from ADP in the presence of a proton gradient across the membrane. The alpha chain is a regulatory subunit. The sequence is that of ATP synthase subunit alpha, chloroplastic from Solanum bulbocastanum (Wild potato).